The primary structure comprises 253 residues: 5'/3'-nucleotidase SurE (253 aa).

Positions 8, 9, 39, and 92 each coordinate a divalent metal cation.

The protein belongs to the SurE nucleotidase family. A divalent metal cation is required as a cofactor.

The protein resides in the cytoplasm. It carries out the reaction a ribonucleoside 5'-phosphate + H2O = a ribonucleoside + phosphate. It catalyses the reaction a ribonucleoside 3'-phosphate + H2O = a ribonucleoside + phosphate. The catalysed reaction is [phosphate](n) + H2O = [phosphate](n-1) + phosphate + H(+). In terms of biological role, nucleotidase with a broad substrate specificity as it can dephosphorylate various ribo- and deoxyribonucleoside 5'-monophosphates and ribonucleoside 3'-monophosphates with highest affinity to 3'-AMP. Also hydrolyzes polyphosphate (exopolyphosphatase activity) with the preference for short-chain-length substrates (P20-25). Might be involved in the regulation of dNTP and NTP pools, and in the turnover of 3'-mononucleotides produced by numerous intracellular RNases (T1, T2, and F) during the degradation of various RNAs. This chain is 5'/3'-nucleotidase SurE, found in Sodalis glossinidius (strain morsitans).